An 839-amino-acid polypeptide reads, in one-letter code: Autophagy-related protein 9A (839 aa).

Residues 1–20 (MAQFDTEYQRLEASYSDSPP) form a disordered region. Position 2 is an N-acetylalanine (A2). The Cytoplasmic portion of the chain corresponds to 2–61 (AQFDTEYQRLEASYSDSPPGEEDLLVHVAEGSKSPWHHIENLDLFFSRVYNLHQKNGFTC). Residues 8 to 11 (YQRL) carry the Tyrosine-based sorting signal motif. Residues S14, S16, and S18 each carry the phosphoserine modification. The helical transmembrane segment at 62–84 (MLIGEIFELMQFLFVVAFTTFLV) threads the bilayer. Topologically, residues 85–128 (SCVDYDILFANKMVNHSLHPTEPVKVTLPDAFLPAQVCSARIQE) are lumenal. N99 carries an N-linked (GlcNAc...) asparagine glycan. Residues 129-154 (NGSLITILVIAGVFWIHRLIKFIYNI) form a helical membrane-spanning segment. Residues 155–290 (CCYWEIHSFY…ELAQRLSNRI (136 aa)) lie on the Cytoplasmic side of the membrane. The stretch at 291 to 301 (LWIGIANFLLC) is an intramembrane region. Topologically, residues 302 to 319 (PLILIWQILYAFFSYAEV) are cytoplasmic. The stretch at 320-328 (LKREPGALG) is an intramembrane region. Over 329-371 (ARCWSLYGRCYLRHFNELEHELQSRLNRGYKPASKYMNCFLSP) the chain is Cytoplasmic. Residues 372-397 (LLTLLAKNGAFFAGSILAVLIALTIY) form a helical membrane-spanning segment. Topologically, residues 398-406 (DEDVLAVEH) are lumenal. The helical transmembrane segment at 407–424 (VLTTVTLLGVTVTVCRSF) threads the bilayer. Residues 425-470 (IPDQHMVFCPEQLLRVILAHIHYMPDHWQGNAHRSQTRDEFAQLFQ) are Cytoplasmic-facing. An intramembrane segment occupies 471–480 (YKAVFILEEL). Residues 481 to 483 (LSP) are Cytoplasmic-facing. Residues 484-492 (IVTPLILIF) lie within the membrane without spanning it. The Cytoplasmic portion of the chain corresponds to 493–839 (CLRPRALEII…DELPPQVHKV (347 aa)). Phosphoserine occurs at positions 656, 735, 738, 741, and 828. Disordered stretches follow at residues 656-686 (SPLQ…SSGS) and 719-839 (QQAQ…VHKV). Residues 724 to 736 (EPERHLWHRRESD) show a composition bias toward basic and acidic residues. Composition is skewed to acidic residues over residues 737 to 747 (ESGESAPDEGG) and 823 to 832 (VPEEGSEDEL).

The protein belongs to the ATG9 family. As to quaternary structure, homotrimer; forms a homotrimer with a central pore that forms a path between the two membrane leaflets. Interacts (via cytoplasmic its C-terminus) with ATG2A. Interacts with SUPT20H. Interacts (via the tyrosine-based sorting signal motif) with AP4M1; promoting association with the AP-4 complex. Interacts with ARFIP1 and ARFIP2. Interacts with PI4K2A and PI4KB. Interacts with ATG4A; the interaction is direct and promotes ATG9A trafficking. Ufmylated in a DDRGK1 dependent manner.

It is found in the preautophagosomal structure membrane. The protein localises to the cytoplasmic vesicle. It localises to the autophagosome membrane. Its subcellular location is the golgi apparatus. The protein resides in the trans-Golgi network membrane. It is found in the late endosome membrane. The protein localises to the recycling endosome membrane. It localises to the endoplasmic reticulum membrane. Its subcellular location is the mitochondrion membrane. The enzyme catalyses a 1,2-diacyl-sn-glycero-3-phosphocholine(in) = a 1,2-diacyl-sn-glycero-3-phosphocholine(out). It carries out the reaction a 1,2-diacyl-sn-glycero-3-phospho-L-serine(in) = a 1,2-diacyl-sn-glycero-3-phospho-L-serine(out). It catalyses the reaction a 1,2-diacyl-sn-glycero-3-phosphoethanolamine(in) = a 1,2-diacyl-sn-glycero-3-phosphoethanolamine(out). In terms of biological role, phospholipid scramblase involved in autophagy by mediating autophagosomal membrane expansion. Cycles between the preautophagosomal structure/phagophore assembly site (PAS) and the cytoplasmic vesicle pool and supplies membrane for the growing autophagosome. Lipid scramblase activity plays a key role in preautophagosomal structure/phagophore assembly by distributing the phospholipids that arrive through ATG2 (ATG2A or ATG2B) from the cytoplasmic to the luminal leaflet of the bilayer, thereby driving autophagosomal membrane expansion. Also required to supply phosphatidylinositol 4-phosphate to the autophagosome initiation site by recruiting the phosphatidylinositol 4-kinase beta (PI4KB) in a process dependent on ARFIP2, but not ARFIP1. In addition to autophagy, also plays a role in necrotic cell death. The polypeptide is Autophagy-related protein 9A (Pongo abelii (Sumatran orangutan)).